A 169-amino-acid polypeptide reads, in one-letter code: Endoribonuclease YbeY (169 aa).

Zn(2+)-binding residues include His117, His121, and His127.

Belongs to the endoribonuclease YbeY family. Requires Zn(2+) as cofactor.

It localises to the cytoplasm. Its function is as follows. Single strand-specific metallo-endoribonuclease involved in late-stage 70S ribosome quality control and in maturation of the 3' terminus of the 16S rRNA. In Mesoplasma florum (strain ATCC 33453 / NBRC 100688 / NCTC 11704 / L1) (Acholeplasma florum), this protein is Endoribonuclease YbeY.